A 192-amino-acid polypeptide reads, in one-letter code: Protein GrpE (192 aa).

The segment covering 1–20 (MEERNEQVVEEVKEEVKEAQ) has biased composition (basic and acidic residues). The interval 1–39 (MEERNEQVVEEVKEEVKEAQVEEAVTSEDSEESVEEKSE) is disordered. The span at 25-34 (VTSEDSEESV) shows a compositional bias: acidic residues.

It belongs to the GrpE family. As to quaternary structure, homodimer.

The protein resides in the cytoplasm. Participates actively in the response to hyperosmotic and heat shock by preventing the aggregation of stress-denatured proteins, in association with DnaK and GrpE. It is the nucleotide exchange factor for DnaK and may function as a thermosensor. Unfolded proteins bind initially to DnaJ; upon interaction with the DnaJ-bound protein, DnaK hydrolyzes its bound ATP, resulting in the formation of a stable complex. GrpE releases ADP from DnaK; ATP binding to DnaK triggers the release of the substrate protein, thus completing the reaction cycle. Several rounds of ATP-dependent interactions between DnaJ, DnaK and GrpE are required for fully efficient folding. This chain is Protein GrpE, found in Bacillus cereus (strain ATCC 10987 / NRS 248).